Reading from the N-terminus, the 142-residue chain is Nucleoside diphosphate kinase (142 aa).

The ATP site is built by Lys-9, Phe-57, Arg-85, Thr-91, Arg-102, and Asn-112. His-115 acts as the Pros-phosphohistidine intermediate in catalysis.

This sequence belongs to the NDK family. As to quaternary structure, homotetramer. It depends on Mg(2+) as a cofactor.

The protein localises to the cytoplasm. It carries out the reaction a 2'-deoxyribonucleoside 5'-diphosphate + ATP = a 2'-deoxyribonucleoside 5'-triphosphate + ADP. It catalyses the reaction a ribonucleoside 5'-diphosphate + ATP = a ribonucleoside 5'-triphosphate + ADP. In terms of biological role, major role in the synthesis of nucleoside triphosphates other than ATP. The ATP gamma phosphate is transferred to the NDP beta phosphate via a ping-pong mechanism, using a phosphorylated active-site intermediate. The polypeptide is Nucleoside diphosphate kinase (Dehalococcoides mccartyi (strain ATCC BAA-2100 / JCM 16839 / KCTC 5957 / BAV1)).